The sequence spans 625 residues: Threonine--tRNA ligase (625 aa).

Residues 1–147 (MRILLIHSDY…TIVPGEAKKE (147 aa)) are editing domain. The interval 206-505 (PHVKIMLEQE…MKKGKKPMYP (300 aa)) is catalytic. Residues Cys298, His350, and His474 each contribute to the Zn(2+) site.

Belongs to the class-II aminoacyl-tRNA synthetase family. Homodimer. Zn(2+) serves as cofactor.

Its subcellular location is the cytoplasm. The enzyme catalyses tRNA(Thr) + L-threonine + ATP = L-threonyl-tRNA(Thr) + AMP + diphosphate + H(+). Catalyzes the attachment of threonine to tRNA(Thr) in a two-step reaction: L-threonine is first activated by ATP to form Thr-AMP and then transferred to the acceptor end of tRNA(Thr). Also edits incorrectly charged L-seryl-tRNA(Thr). The polypeptide is Threonine--tRNA ligase (Thermococcus sibiricus (strain DSM 12597 / MM 739)).